Here is a 370-residue protein sequence, read N- to C-terminus: tRNA/tmRNA (uracil-C(5))-methyltransferase (370 aa).

Glutamine 190, tyrosine 218, asparagine 223, glutamate 239, and aspartate 299 together coordinate S-adenosyl-L-methionine. The active-site Nucleophile is the cysteine 324. Glutamate 358 (proton acceptor) is an active-site residue.

This sequence belongs to the class I-like SAM-binding methyltransferase superfamily. RNA M5U methyltransferase family. TrmA subfamily.

The enzyme catalyses uridine(54) in tRNA + S-adenosyl-L-methionine = 5-methyluridine(54) in tRNA + S-adenosyl-L-homocysteine + H(+). It catalyses the reaction uridine(341) in tmRNA + S-adenosyl-L-methionine = 5-methyluridine(341) in tmRNA + S-adenosyl-L-homocysteine + H(+). In terms of biological role, dual-specificity methyltransferase that catalyzes the formation of 5-methyluridine at position 54 (m5U54) in all tRNAs, and that of position 341 (m5U341) in tmRNA (transfer-mRNA). This Sodalis glossinidius (strain morsitans) protein is tRNA/tmRNA (uracil-C(5))-methyltransferase.